A 480-amino-acid polypeptide reads, in one-letter code: Proline--tRNA ligase (480 aa).

This sequence belongs to the class-II aminoacyl-tRNA synthetase family. ProS type 3 subfamily. Homodimer.

The protein resides in the cytoplasm. It carries out the reaction tRNA(Pro) + L-proline + ATP = L-prolyl-tRNA(Pro) + AMP + diphosphate. Its function is as follows. Catalyzes the attachment of proline to tRNA(Pro) in a two-step reaction: proline is first activated by ATP to form Pro-AMP and then transferred to the acceptor end of tRNA(Pro). This is Proline--tRNA ligase from Roseiflexus castenholzii (strain DSM 13941 / HLO8).